Consider the following 362-residue polypeptide: UDP-N-acetylglucosamine--N-acetylmuramyl-(pentapeptide) pyrophosphoryl-undecaprenol N-acetylglucosamine transferase (362 aa).

Residues 15-17, N127, R165, S191, I247, 266-271, and Q292 each bind UDP-N-acetyl-alpha-D-glucosamine; these read TGG and ALTVSE.

Belongs to the glycosyltransferase 28 family. MurG subfamily.

It localises to the cell inner membrane. It carries out the reaction di-trans,octa-cis-undecaprenyl diphospho-N-acetyl-alpha-D-muramoyl-L-alanyl-D-glutamyl-meso-2,6-diaminopimeloyl-D-alanyl-D-alanine + UDP-N-acetyl-alpha-D-glucosamine = di-trans,octa-cis-undecaprenyl diphospho-[N-acetyl-alpha-D-glucosaminyl-(1-&gt;4)]-N-acetyl-alpha-D-muramoyl-L-alanyl-D-glutamyl-meso-2,6-diaminopimeloyl-D-alanyl-D-alanine + UDP + H(+). The protein operates within cell wall biogenesis; peptidoglycan biosynthesis. Its function is as follows. Cell wall formation. Catalyzes the transfer of a GlcNAc subunit on undecaprenyl-pyrophosphoryl-MurNAc-pentapeptide (lipid intermediate I) to form undecaprenyl-pyrophosphoryl-MurNAc-(pentapeptide)GlcNAc (lipid intermediate II). This Shewanella baltica (strain OS223) protein is UDP-N-acetylglucosamine--N-acetylmuramyl-(pentapeptide) pyrophosphoryl-undecaprenol N-acetylglucosamine transferase.